Consider the following 289-residue polypeptide: ATP synthase gamma chain (289 aa).

The protein belongs to the ATPase gamma chain family. As to quaternary structure, F-type ATPases have 2 components, CF(1) - the catalytic core - and CF(0) - the membrane proton channel. CF(1) has five subunits: alpha(3), beta(3), gamma(1), delta(1), epsilon(1). CF(0) has three main subunits: a, b and c.

Its subcellular location is the cell inner membrane. Functionally, produces ATP from ADP in the presence of a proton gradient across the membrane. The gamma chain is believed to be important in regulating ATPase activity and the flow of protons through the CF(0) complex. The chain is ATP synthase gamma chain from Herminiimonas arsenicoxydans.